We begin with the raw amino-acid sequence, 105 residues long: ATP-dependent Clp protease adapter protein ClpS (105 aa).

This sequence belongs to the ClpS family. As to quaternary structure, binds to the N-terminal domain of the chaperone ClpA.

Involved in the modulation of the specificity of the ClpAP-mediated ATP-dependent protein degradation. The sequence is that of ATP-dependent Clp protease adapter protein ClpS from Klebsiella pneumoniae (strain 342).